A 234-amino-acid chain; its full sequence is Purine nucleoside phosphorylase DeoD-type (234 aa).

His-4 contacts a purine D-ribonucleoside. Residues Gly-20, Arg-24, Arg-43, and 87–90 contribute to the phosphate site; that span reads RIGS. A purine D-ribonucleoside-binding positions include Glu-162, 179-181, and 203-204; these read EME and SD. Asp-204 serves as the catalytic Proton donor.

This sequence belongs to the PNP/UDP phosphorylase family. In terms of assembly, homohexamer; trimer of homodimers.

It catalyses the reaction a purine D-ribonucleoside + phosphate = a purine nucleobase + alpha-D-ribose 1-phosphate. The enzyme catalyses a purine 2'-deoxy-D-ribonucleoside + phosphate = a purine nucleobase + 2-deoxy-alpha-D-ribose 1-phosphate. Functionally, catalyzes the reversible phosphorolytic breakdown of the N-glycosidic bond in the beta-(deoxy)ribonucleoside molecules, with the formation of the corresponding free purine bases and pentose-1-phosphate. This is Purine nucleoside phosphorylase DeoD-type from Jannaschia sp. (strain CCS1).